A 255-amino-acid chain; its full sequence is 5'-nucleotidase SurE (255 aa).

A divalent metal cation contacts are provided by Asp8, Asp9, Ser39, and Asn91.

Belongs to the SurE nucleotidase family. It depends on a divalent metal cation as a cofactor.

The protein resides in the cytoplasm. It carries out the reaction a ribonucleoside 5'-phosphate + H2O = a ribonucleoside + phosphate. Functionally, nucleotidase that shows phosphatase activity on nucleoside 5'-monophosphates. The protein is 5'-nucleotidase SurE of Acinetobacter baumannii (strain ATCC 17978 / DSM 105126 / CIP 53.77 / LMG 1025 / NCDC KC755 / 5377).